The sequence spans 1387 residues: Kinesin-like protein KIF15-B (1387 aa).

In terms of domain architecture, Kinesin motor spans 26–364 (AIKVFVRIRP…LQFAQRAKLI (339 aa)). 110-117 (GQTGSGKT) contributes to the ATP binding site. A coiled-coil region spans residues 369 to 1383 (VVNEDTQGNV…NLFLKETKKC (1015 aa)). Residues 1138 to 1387 (NSPVVLAQTP…KETKKCEHCD (250 aa)) are necessary for its targeting to microtubule minus ends.

It belongs to the TRAFAC class myosin-kinesin ATPase superfamily. Kinesin family. KLP2 subfamily. As to quaternary structure, homodimer. Dimerization is required for targeting to microtubule minus ends. Found in a complex with tpx2 and microtubules. Its association with microtubules and targeting to microtubule minus ends requires tpx2. In terms of tissue distribution, strongly expressed in testis and weakly in lung (at protein level).

The protein resides in the cytoplasm. Its subcellular location is the cytoskeleton. The protein localises to the microtubule organizing center. It localises to the centrosome. It is found in the spindle. The protein resides in the spindle pole. Its function is as follows. Plus-end directed kinesin-like motor enzyme involved in mitotic spindle assembly. Required for centrosome separation and maintenance of spindle bipolarity during mitosis. This chain is Kinesin-like protein KIF15-B (kif15-b), found in Xenopus laevis (African clawed frog).